Reading from the N-terminus, the 395-residue chain is ATP synthase subunit beta, chloroplastic (395 aa).

An ATP-binding site is contributed by glycine 72 to threonine 79.

Belongs to the ATPase alpha/beta chains family. F-type ATPases have 2 components, CF(1) - the catalytic core - and CF(0) - the membrane proton channel. CF(1) has five subunits: alpha(3), beta(3), gamma(1), delta(1), epsilon(1). CF(0) has four main subunits: a(1), b(1), b'(1) and c(9-12).

The protein resides in the plastid. It is found in the chloroplast thylakoid membrane. It catalyses the reaction ATP + H2O + 4 H(+)(in) = ADP + phosphate + 5 H(+)(out). Its function is as follows. Produces ATP from ADP in the presence of a proton gradient across the membrane. The catalytic sites are hosted primarily by the beta subunits. The chain is ATP synthase subunit beta, chloroplastic from Blechnum occidentale (Hammock fern).